A 77-amino-acid chain; its full sequence is Large ribosomal subunit protein uL29 (77 aa).

It belongs to the universal ribosomal protein uL29 family.

The protein is Large ribosomal subunit protein uL29 of Mycolicibacterium gilvum (strain PYR-GCK) (Mycobacterium gilvum (strain PYR-GCK)).